Here is a 270-residue protein sequence, read N- to C-terminus: MQPAKNLLFSSLLFSSLLFSSAARAASEDGGRGPYVQADLAYAAERITHDYPKPTGTGKNKISTVSDYFRNIRTHSVHPRVSVGYDFGSWRIAADYARYRKWNNNKYSVSIKELLRNDNSASGVRGHLNIQTQKTEHQENGTFHAVSSLGLSTIYDFDTGSRFKPYIGMRVAYGHVRHQVRSVEQETEIITTYPSNGGGKVSLSSKMPPKSAHHQSNSIRRVGLGVIAGVGFDITPNLTLDTGYRYHNWGRLENTRFKTHEASLGMRYRF.

The signal sequence occupies residues methionine 1–alanine 25. The Extracellular segment spans residues alanine 26–tyrosine 35. Residues valine 36–alanine 44 traverse the membrane as a beta stranded segment. Over glutamate 45–serine 76 the chain is Periplasmic. Residues valine 77–tyrosine 85 form a beta stranded membrane-spanning segment. The Extracellular segment spans residues aspartate 86 to serine 89. A beta stranded transmembrane segment spans residues tryptophan 90 to tyrosine 96. The Periplasmic portion of the chain corresponds to alanine 97–threonine 142. Residues phenylalanine 143–phenylalanine 157 traverse the membrane as a beta stranded segment. The Extracellular portion of the chain corresponds to aspartate 158–arginine 162. The chain crosses the membrane as a beta stranded span at residues phenylalanine 163–tyrosine 173. The Periplasmic portion of the chain corresponds to glycine 174–arginine 221. Positions proline 194 to asparagine 217 are disordered. A beta stranded transmembrane segment spans residues valine 222–isoleucine 234. The Extracellular segment spans residues threonine 235–asparagine 237. A beta stranded transmembrane segment spans residues leucine 238–tyrosine 246. Topologically, residues histidine 247–glutamate 261 are periplasmic. A beta stranded transmembrane segment spans residues alanine 262–phenylalanine 270.

The protein belongs to the opacity porin family. As to quaternary structure, homotrimer.

It localises to the cell outer membrane. This protein serves as a porin. The protein is Outer membrane protein P.IIC (piiC) of Neisseria gonorrhoeae.